Here is a 670-residue protein sequence, read N- to C-terminus: Solute carrier organic anion transporter family member 1A2 (670 aa).

At 1–20 the chain is on the cytoplasmic side; it reads MGETEKRIETHRIRCLSKLK. Residues 21–40 form a helical membrane-spanning segment; it reads MFLLAITCAFVSKTLSGSYM. The Extracellular segment spans residues 41–59; sequence NSMLTQIERQFNIPTSLVG. The helical transmembrane segment at 60–80 threads the bilayer; it reads FINGSFEIGNLLLIIFVSYFG. Topologically, residues 81–86 are cytoplasmic; it reads TKLHRP. Residues 87–111 form a helical membrane-spanning segment; sequence IMIGIGCVVMGLGCFLKSLPHFLMN. At 112–155 the chain is on the extracellular side; that stretch reads QYEYESTVSVSGNLSSNSFLCMENGTQILRPTQDPSECTKEVKS. 2 N-linked (GlcNAc...) asparagine glycosylation sites follow: Asn124 and Asn135. The chain crosses the membrane as a helical span at residues 156-184; that stretch reads LMWVYVLVGNIVRGMGETPILPLGISYIE. At 185–203 the chain is on the cytoplasmic side; that stretch reads DFAKFENSPLYIGLVETGA. A helical transmembrane segment spans residues 204–224; that stretch reads IIGPLIGLLLASFCANVYVDT. Residues 225–242 lie on the Extracellular side of the membrane; the sequence is GFVNTDDLIITPTDTRWV. The chain crosses the membrane as a helical span at residues 243 to 267; sequence GAWWFGFLICAGVNVLTAIPFFFLP. At 268-311 the chain is on the cytoplasmic side; sequence NTLPKEGLETNADIIKNENEDKQKEEVKKEKYGITKDFLPFMKS. Residues 312 to 333 form a helical membrane-spanning segment; the sequence is LSCNPIYMLFILVSVIQFNAFV. The Extracellular portion of the chain corresponds to 334–353; the sequence is NMISFMPKYLEQQYGISSSD. The chain crosses the membrane as a helical span at residues 354–377; sequence AIFLMGIYNLPPICIGYIIGGLIM. Over 378–381 the chain is Cytoplasmic; sequence KKFK. The chain crosses the membrane as a helical span at residues 382-405; that stretch reads ITVKQAAHIGCWLSLLEYLLYFLS. The Extracellular portion of the chain corresponds to 406–513; that stretch reads FLMTCENSSV…PDCSLMLQYF (108 aa). Asn412 and Asn419 each carry an N-linked (GlcNAc...) asparagine glycan. The region spanning 433 to 488 is the Kazal-like domain; sequence NDIFADCNVDCNCPSKIWDPVCGNNGLSYLSACLAGCETSIGTGINMVFQNCSCIQ. 3 disulfides stabilise this stretch: Cys439/Cys469, Cys445/Cys465, and Cys454/Cys486. Residues 514-536 traverse the membrane as a helical segment; sequence LILSAMSSFIYSLAAIPGYMVLL. Residues 537-545 lie on the Cytoplasmic side of the membrane; sequence RCMKSEEKS. Residues 546 to 571 traverse the membrane as a helical segment; it reads LGVGLHTFCTRVFAGIPAPIYFGALM. Over 572–605 the chain is Extracellular; the sequence is DSTCLHWGTLKCGESGACRIYDSTTFRYIYLGLP. The helical transmembrane segment at 606–623 threads the bilayer; sequence AALRGSSFVPALIILILL. Residues 624–670 lie on the Cytoplasmic side of the membrane; the sequence is RKCHLPGENASSGTELIETKVKGKENECKDIYQKSTVLKDDELKTKL.

It belongs to the organo anion transporter (TC 2.A.60) family. Higher expression in the brain than in liver and kidney. Expressed in brain neurons in both cortex and hippocampus. Expressed in placental trophoblasts. Also expressed in lung and testes at lower levels. Expressed in the eye (at protein level). Expressed in the retina in the outer and inner nuclear layers, the inner plexiform layer and the ganglion cell layer. Expressed in liver and prostate. In testis, primarily localized to the basal membrane of Sertoli cells and weakly expressed in Leydig cells and within the tubules. Expressed in fetal brain and liver.

The protein resides in the cell membrane. The protein localises to the basal cell membrane. It catalyses the reaction taurocholate(out) = taurocholate(in). It carries out the reaction glycocholate(out) = glycocholate(in). The catalysed reaction is taurochenodeoxycholate(out) = taurochenodeoxycholate(in). The enzyme catalyses tauroursodeoxycholate(out) = tauroursodeoxycholate(in). It catalyses the reaction dehydroepiandrosterone 3-sulfate(out) = dehydroepiandrosterone 3-sulfate(in). It carries out the reaction estrone 3-sulfate(out) = estrone 3-sulfate(in). The catalysed reaction is 3,3',5'-triiodo-L-thyronine(out) = 3,3',5'-triiodo-L-thyronine(in). The enzyme catalyses L-thyroxine(out) = L-thyroxine(in). It catalyses the reaction taurodeoxycholate(out) = taurodeoxycholate(in). It carries out the reaction glycodeoxycholate(out) = glycodeoxycholate(in). The catalysed reaction is glycochenodeoxycholate(out) = glycochenodeoxycholate(in). The enzyme catalyses glycoursodeoxycholate(out) = glycoursodeoxycholate(in). It catalyses the reaction 17beta-estradiol 17-O-(beta-D-glucuronate)(out) = 17beta-estradiol 17-O-(beta-D-glucuronate)(in). It carries out the reaction prostaglandin E2(out) = prostaglandin E2(in). The catalysed reaction is substance P(out) = substance P(in). Transport activity is inhibited by the grapefruit juice component naringin. Na(+)-independent transporter that mediates the cellular uptake of a broad range of organic anions such as the endogenous bile salts cholate and deoxycholate, either in their unconjugated or conjugated forms (taurocholate and glycocholate), at the plasmam membrane. Responsible for intestinal absorption of bile acids. Transports dehydroepiandrosterone 3-sulfate (DHEAS), a major circulating steroid secreted by the adrenal cortex, as well as estrone 3-sulfate and 17beta-estradiol 17-O-(beta-D-glucuronate). Mediates apical uptake of all-trans-retinol (atROL) across human retinal pigment epithelium, which is essential to maintaining the integrity of the visual cycle and thus vision. Involved in the uptake of clinically used drugs. Capable of thyroid hormone transport (both T3 or 3,3',5'-triiodo-L-thyronine, and T4 or L-tyroxine). Also transports prostaglandin E2. Plays roles in blood-brain and -cerebrospinal fluid barrier transport of organic anions and signal mediators, and in hormone uptake by neural cells. May also play a role in the reuptake of neuropeptides such as substance P/TAC1 and vasoactive intestinal peptide/VIP released from retinal neurons. May play an important role in plasma and tissue distribution of the structurally diverse chemotherapeutic drugs methotrexate and paclitaxel. Shows a pH-sensitive substrate specificity which may be ascribed to the protonation state of the binding site and leads to a stimulation of substrate transport in an acidic microenvironment. Hydrogencarbonate/HCO3(-) acts as the probable counteranion that exchanges for organic anions. May contribute to regulate the transport of organic compounds in testis across the blood-testis-barrier. In Homo sapiens (Human), this protein is Solute carrier organic anion transporter family member 1A2 (SLCO1A2).